Consider the following 547-residue polypeptide: MARFIFITGGVVSSLGKGLASAALGALLQARGFSVRLRKLDPYLNVDPGTMSPFEHGEVFVTDDGAETDLDLGHYERFTGVAARKTDSVSSGRIYSNVLEKERRGDYLGKTIQVIPHVTNEIKDFISIGEDEVDFMLCEIGGTVGDIEGLPFFEAIRQFSQDKPRGQCIFMHLTLLPYIKASGELKTKPTQHSVKELRSIGLAPDILVCRSEGPIPQKEREKLALFCNVRPDSVIAAQDLSTIYDAPLAYHREGLDQAVLDAFQISPAPKPDLTKWEDVSDRVHNPEGEVKIAIVGKYVQLEDAYKSIAEALTHGGMANRVKVRIEWVDAEIFEKEDPAPHLEGFHAILVPGGFGERGTEGKIKAAQYAREHQVPYLGICLGMQMAVIEAARNVAGIAGAGSEEFDHEAGKKRFEPVVYHLKEWVQGNYKVSRKVDDDKGGTMRLGAYDAVLKEGSRVAEVYGGTAIEERHRHRYEVDIKYREQLEKAGLCFSGMSPDGRLPEIVEWTDHPWFIGVQYHPELKSKPFDPHPLFADFVRAAKESSRLV.

The amidoligase domain stretch occupies residues 1 to 265; sequence MARFIFITGG…DQAVLDAFQI (265 aa). S13 is a binding site for CTP. S13 is a UTP binding site. ATP-binding positions include 14–19 and D71; that span reads SLGKGL. Residues D71 and E139 each contribute to the Mg(2+) site. Residues 146–148, 186–191, and K222 contribute to the CTP site; these read DIE and KTKPTQ. UTP is bound by residues 186–191 and K222; that span reads KTKPTQ. The Glutamine amidotransferase type-1 domain occupies 291 to 546; it reads KIAIVGKYVQ…VRAAKESSRL (256 aa). An L-glutamine-binding site is contributed by G353. C380 (nucleophile; for glutamine hydrolysis) is an active-site residue. Residues 381–384, E404, and R474 contribute to the L-glutamine site; that span reads LGMQ. Active-site residues include H519 and E521.

It belongs to the CTP synthase family. As to quaternary structure, homotetramer.

It carries out the reaction UTP + L-glutamine + ATP + H2O = CTP + L-glutamate + ADP + phosphate + 2 H(+). It catalyses the reaction L-glutamine + H2O = L-glutamate + NH4(+). The catalysed reaction is UTP + NH4(+) + ATP = CTP + ADP + phosphate + 2 H(+). Its pathway is pyrimidine metabolism; CTP biosynthesis via de novo pathway; CTP from UDP: step 2/2. With respect to regulation, allosterically activated by GTP, when glutamine is the substrate; GTP has no effect on the reaction when ammonia is the substrate. The allosteric effector GTP functions by stabilizing the protein conformation that binds the tetrahedral intermediate(s) formed during glutamine hydrolysis. Inhibited by the product CTP, via allosteric rather than competitive inhibition. Catalyzes the ATP-dependent amination of UTP to CTP with either L-glutamine or ammonia as the source of nitrogen. Regulates intracellular CTP levels through interactions with the four ribonucleotide triphosphates. This is CTP synthase from Ruegeria pomeroyi (strain ATCC 700808 / DSM 15171 / DSS-3) (Silicibacter pomeroyi).